An 84-amino-acid polypeptide reads, in one-letter code: MQILQVKKQLVLTSRLKDLGHLPLKALSSETGEIFVAMDPVGTKDGDWVFTIANSAARDAAGDKRLLTDLTVGGIIDDWQPKQK.

Residues 1–77 (MQILQVKKQL…TDLTVGGIID (77 aa)) form the BMV domain.

The protein belongs to the CcmL/EutN family. CsoS4 subfamily. In terms of assembly, homopentamer.

The protein resides in the carboxysome. In terms of biological role, probably forms vertices in the carboxysome, a polyhedral inclusion where RuBisCO (ribulose bisphosphate carboxylase, cbbL-cbbS) is sequestered. Has been modeled to induce curvature upon insertion into an otherwise flat hexagonal layer of major carboxysome subunits. In Hydrogenovibrio crunogenus (strain DSM 25203 / XCL-2) (Thiomicrospira crunogena), this protein is Carboxysome shell vertex protein CsoS4B.